The sequence spans 297 residues: 3-mercaptopyruvate sulfurtransferase (297 aa).

Alanine 2 carries the N-acetylalanine modification. A phosphoserine mark is found at serine 3, tryptophan 15, proline 23, and serine 35. The Rhodanese 1 domain occupies 25-144; that stretch reads AGQPLQLLDA…WLRQNLPLSS (120 aa). At lysine 40 the chain carries N6-acetyllysine; alternate. Lysine 40 is modified (N6-succinyllysine; alternate). Residues 145 to 160 are hinge; that stretch reads GKSQPAPAEFRAQLDP. N6-succinyllysine is present on residues lysine 146 and lysine 164. The Rhodanese 2 domain occupies 174-288; that stretch reads ESRRFQVVDS…WYMRARPEDV (115 aa). Position 188 (arginine 188) interacts with substrate. Cysteine 248 (cysteine persulfide intermediate) is an active-site residue.

In terms of assembly, monomer (active form). Homodimer; disulfide-linked (inactive form).

The protein localises to the cytoplasm. It localises to the mitochondrion. It is found in the synapse. Its subcellular location is the synaptosome. The catalysed reaction is 2-oxo-3-sulfanylpropanoate + [thioredoxin]-dithiol = [thioredoxin]-disulfide + hydrogen sulfide + pyruvate + H(+). By oxidative stress, and thioredoxin. Under oxidative stress conditions, the catalytic cysteine site is converted to a sulfenate which inhibits the MPST enzyme activity. Reduced thioredoxin cleaves an intersubunit disulfide bond to turn on the redox switch and reactivate the enzyme. In terms of biological role, transfer of a sulfur ion to cyanide or to other thiol compounds. Also has weak rhodanese activity. Detoxifies cyanide and is required for thiosulfate biosynthesis. Acts as an antioxidant. In combination with cysteine aminotransferase (CAT), contributes to the catabolism of cysteine and is an important producer of hydrogen sulfide in the brain, retina and vascular endothelial cells. Hydrogen sulfide H(2)S is an important synaptic modulator, signaling molecule, smooth muscle contractor and neuroprotectant. Its production by the 3MST/CAT pathway is regulated by calcium ions. This Homo sapiens (Human) protein is 3-mercaptopyruvate sulfurtransferase (MPST).